Reading from the N-terminus, the 658-residue chain is Glycogen debranching enzyme (658 aa).

Residue Asp336 is the Nucleophile of the active site. The active-site Proton donor is the Glu371. Residues 459-483 are disordered; sequence EANGEENRDGTNSNYSDNHGKEGLG.

This sequence belongs to the glycosyl hydrolase 13 family.

It carries out the reaction Hydrolysis of (1-&gt;6)-alpha-D-glucosidic linkages to branches with degrees of polymerization of three or four glucose residues in limit dextrin.. Its pathway is glycan degradation; glycogen degradation. Removes maltotriose and maltotetraose chains that are attached by 1,6-alpha-linkage to the limit dextrin main chain, generating a debranched limit dextrin. This is Glycogen debranching enzyme from Salmonella agona (strain SL483).